The sequence spans 182 residues: Testis-expressed protein 29 (182 aa).

At 1 to 56 (MRYTTDIKKSPPQLLKTFAVCDISLYDICDYNVTRDQCKELGCCFYKGVCYKKVVP) the chain is on the extracellular side. Residues 57–77 (IYVQMFSTLIVLVTGIIIITI) traverse the membrane as a helical segment. Over 78–182 (IYRIVQEIKR…PPTDPSENPP (105 aa)) the chain is Cytoplasmic. The interval 91 to 182 (LSMNSTPKAS…PPTDPSENPP (92 aa)) is disordered. The segment covering 115–170 (RAPSRSPSRTSSTLSSRSPTTAPTTAPTTDPATDPATDPATDPATDPATDPATDPA) has biased composition (low complexity). Residues 171–182 (TAPPTDPSENPP) show a composition bias toward pro residues.

It is found in the membrane. This chain is Testis-expressed protein 29 (Tex29), found in Rattus norvegicus (Rat).